A 419-amino-acid polypeptide reads, in one-letter code: Serine hydroxymethyltransferase 2 (419 aa).

(6S)-5,6,7,8-tetrahydrofolate contacts are provided by residues Leu-120 and Gly-124–Leu-126. Lys-229 is subject to N6-(pyridoxal phosphate)lysine.

This sequence belongs to the SHMT family. In terms of assembly, homodimer. Requires pyridoxal 5'-phosphate as cofactor.

The protein resides in the cytoplasm. The enzyme catalyses (6R)-5,10-methylene-5,6,7,8-tetrahydrofolate + glycine + H2O = (6S)-5,6,7,8-tetrahydrofolate + L-serine. The protein operates within one-carbon metabolism; tetrahydrofolate interconversion. Its pathway is amino-acid biosynthesis; glycine biosynthesis; glycine from L-serine: step 1/1. Its function is as follows. Catalyzes the reversible interconversion of serine and glycine with tetrahydrofolate (THF) serving as the one-carbon carrier. This reaction serves as the major source of one-carbon groups required for the biosynthesis of purines, thymidylate, methionine, and other important biomolecules. Also exhibits THF-independent aldolase activity toward beta-hydroxyamino acids, producing glycine and aldehydes, via a retro-aldol mechanism. This chain is Serine hydroxymethyltransferase 2, found in Salmonella typhi.